The sequence spans 259 residues: Dihydroorotate dehydrogenase B (NAD(+)), electron transfer subunit (259 aa).

Positions Met2–Val102 constitute an FAD-binding FR-type domain. Residues Arg53 to Ser56, Leu70 to Arg72, and Gly77 to Thr78 each bind FAD. [2Fe-2S] cluster contacts are provided by Cys221, Cys226, Cys229, and Cys246.

It belongs to the PyrK family. Heterotetramer of 2 PyrK and 2 PyrD type B subunits. [2Fe-2S] cluster is required as a cofactor. FAD serves as cofactor.

It participates in pyrimidine metabolism; UMP biosynthesis via de novo pathway; orotate from (S)-dihydroorotate (NAD(+) route): step 1/1. Responsible for channeling the electrons from the oxidation of dihydroorotate from the FMN redox center in the PyrD type B subunit to the ultimate electron acceptor NAD(+). This is Dihydroorotate dehydrogenase B (NAD(+)), electron transfer subunit from Bacillus cereus (strain ZK / E33L).